Here is a 314-residue protein sequence, read N- to C-terminus: Taste receptor type 2 member 42 (314 aa).

Residues 1–7 lie on the Extracellular side of the membrane; the sequence is MATELDK. A helical membrane pass occupies residues 8-28; the sequence is IFLILEIAEFIIGMLGNVFIG. Over 29–50 the chain is Cytoplasmic; the sequence is LVNCSEGIKNQKVFSADFILTC. Residues 51-71 form a helical membrane-spanning segment; sequence LAISTIGQLFVILFDSFLVGL. Topologically, residues 72–101 are extracellular; sequence ASHLYTTYRLGKPVIMLWHMTNHLTTWLAT. A helical membrane pass occupies residues 102-122; it reads CLSIFYFFKIAHFPHSLFLWL. The Cytoplasmic segment spans residues 123 to 127; the sequence is RWRMN. The helical transmembrane segment at 128 to 148 threads the bilayer; the sequence is GMIVMLLILSLFLLIFNSLVL. The Extracellular portion of the chain corresponds to 149 to 187; it reads EIFIDISLNIIDKSNLTLYLDESKTVYDKLSILKTLLSL. N-linked (GlcNAc...) asparagine glycosylation occurs at asparagine 163. Residues 188–208 traverse the membrane as a helical segment; the sequence is TSFIPFSLSLTSLLFLFLSLV. The Cytoplasmic segment spans residues 209-238; it reads RHTRNLKLSSLGSRDSSTEAHRRAMKMVMS. The chain crosses the membrane as a helical span at residues 239–259; it reads FLFLFIVHFFSLQVANWIFFM. Residues 260–265 lie on the Extracellular side of the membrane; that stretch reads LWNNKY. A helical transmembrane segment spans residues 266–286; it reads IKFAMLALNAFPSCHSFILIL. The Cytoplasmic segment spans residues 287–314; it reads GNSKLRQTAVRLLWHLRNYTKTPNPLPL.

Belongs to the G-protein coupled receptor T2R family.

The protein localises to the membrane. Its function is as follows. Receptor that may play a role in the perception of bitterness and is gustducin-linked. May play a role in sensing the chemical composition of the gastrointestinal content. The activity of this receptor may stimulate alpha gustducin, mediate PLC-beta-2 activation and lead to the gating of TRPM5. The chain is Taste receptor type 2 member 42 (TAS2R42) from Pan troglodytes (Chimpanzee).